The chain runs to 958 residues: Glycine dehydrogenase (decarboxylating) (958 aa).

Lys708 carries the N6-(pyridoxal phosphate)lysine modification.

This sequence belongs to the GcvP family. In terms of assembly, the glycine cleavage system is composed of four proteins: P, T, L and H. It depends on pyridoxal 5'-phosphate as a cofactor.

The catalysed reaction is N(6)-[(R)-lipoyl]-L-lysyl-[glycine-cleavage complex H protein] + glycine + H(+) = N(6)-[(R)-S(8)-aminomethyldihydrolipoyl]-L-lysyl-[glycine-cleavage complex H protein] + CO2. Functionally, the glycine cleavage system catalyzes the degradation of glycine. The P protein binds the alpha-amino group of glycine through its pyridoxal phosphate cofactor; CO(2) is released and the remaining methylamine moiety is then transferred to the lipoamide cofactor of the H protein. The chain is Glycine dehydrogenase (decarboxylating) from Proteus mirabilis (strain HI4320).